A 495-amino-acid polypeptide reads, in one-letter code: Rho GTPase-activating protein 19 (495 aa).

The Rho-GAP domain occupies 98–304; it reads MSLKRKEKGV…FMIKHSQKLF (207 aa). Disordered stretches follow at residues 327–362 and 393–495; these read KDDLDLLTSPGSKELQPLKSQKRSRLDSCHQEETQQ and KHPS…SSSL. Basic and acidic residues-rich tracts occupy residues 350–362, 433–452, and 470–481; these read SRLDSCHQEETQQ, QERKSRDSTPEPKRVSKENV, and KSLEGQKEESCR.

GTPase activator for the Rho-type GTPases by converting them to an inactive GDP-bound state. This chain is Rho GTPase-activating protein 19 (ARHGAP19), found in Gallus gallus (Chicken).